The chain runs to 234 residues: Glucosamine-6-phosphate deaminase (234 aa).

Asp62 (proton acceptor; for enolization step) is an active-site residue. Asn128 acts as the For ring-opening step in catalysis. His130 functions as the Proton acceptor; for ring-opening step in the catalytic mechanism. Glu135 serves as the catalytic For ring-opening step.

This sequence belongs to the glucosamine/galactosamine-6-phosphate isomerase family. NagB subfamily.

The enzyme catalyses alpha-D-glucosamine 6-phosphate + H2O = beta-D-fructose 6-phosphate + NH4(+). It functions in the pathway amino-sugar metabolism; N-acetylneuraminate degradation; D-fructose 6-phosphate from N-acetylneuraminate: step 5/5. Functionally, catalyzes the reversible isomerization-deamination of glucosamine 6-phosphate (GlcN6P) to form fructose 6-phosphate (Fru6P) and ammonium ion. This chain is Glucosamine-6-phosphate deaminase, found in Streptococcus equi subsp. equi (strain 4047).